The chain runs to 151 residues: 1,4-dihydroxy-2-naphthoyl-CoA hydrolase (151 aa).

Aspartate 19 is an active-site residue.

Belongs to the 4-hydroxybenzoyl-CoA thioesterase family. DHNA-CoA hydrolase subfamily.

The catalysed reaction is 1,4-dihydroxy-2-naphthoyl-CoA + H2O = 1,4-dihydroxy-2-naphthoate + CoA + H(+). It functions in the pathway cofactor biosynthesis; phylloquinone biosynthesis. It participates in quinol/quinone metabolism; 1,4-dihydroxy-2-naphthoate biosynthesis; 1,4-dihydroxy-2-naphthoate from chorismate: step 7/7. Catalyzes the hydrolysis of 1,4-dihydroxy-2-naphthoyl-CoA (DHNA-CoA) to 1,4-dihydroxy-2-naphthoate (DHNA), a reaction involved in phylloquinone (vitamin K1) biosynthesis. This chain is 1,4-dihydroxy-2-naphthoyl-CoA hydrolase, found in Prochlorococcus marinus (strain MIT 9313).